Consider the following 386-residue polypeptide: Heat-inducible transcription repressor HrcA (386 aa).

It belongs to the HrcA family.

Negative regulator of class I heat shock genes (grpE-dnaK-dnaJ and groELS operons). Prevents heat-shock induction of these operons. This is Heat-inducible transcription repressor HrcA from Chlamydia abortus (strain DSM 27085 / S26/3) (Chlamydophila abortus).